A 292-amino-acid polypeptide reads, in one-letter code: Malonyl-[acyl-carrier protein] O-methyltransferase (292 aa).

The protein belongs to the methyltransferase superfamily.

It catalyses the reaction malonyl-[ACP] + S-adenosyl-L-methionine = malonyl-[ACP] methyl ester + S-adenosyl-L-homocysteine. The protein operates within cofactor biosynthesis; biotin biosynthesis. Its function is as follows. Converts the free carboxyl group of a malonyl-thioester to its methyl ester by transfer of a methyl group from S-adenosyl-L-methionine (SAM). It allows to synthesize pimeloyl-ACP via the fatty acid synthetic pathway. The sequence is that of Malonyl-[acyl-carrier protein] O-methyltransferase from Alcanivorax borkumensis (strain ATCC 700651 / DSM 11573 / NCIMB 13689 / SK2).